The primary structure comprises 629 residues: tRNA uridine 5-carboxymethylaminomethyl modification enzyme MnmG (629 aa).

Residue 13–18 (GGGHAG) participates in FAD binding. Residue 273–287 (GPRYCPSIEDKVNRF) coordinates NAD(+).

This sequence belongs to the MnmG family. In terms of assembly, homodimer. Heterotetramer of two MnmE and two MnmG subunits. FAD is required as a cofactor.

The protein resides in the cytoplasm. Its function is as follows. NAD-binding protein involved in the addition of a carboxymethylaminomethyl (cmnm) group at the wobble position (U34) of certain tRNAs, forming tRNA-cmnm(5)s(2)U34. This Hahella chejuensis (strain KCTC 2396) protein is tRNA uridine 5-carboxymethylaminomethyl modification enzyme MnmG.